The sequence spans 569 residues: Serine/threonine-protein kinase gad8 (569 aa).

The segment at 19-63 (GLNSGGSSFTRGLKNSTLSSTSSRKSSDEKSRKSSEDKRSPQSTV) is disordered. Residues 31-42 (LKNSTLSSTSSR) are compositionally biased toward low complexity. Positions 43-58 (KSSDEKSRKSSEDKRS) are enriched in basic and acidic residues. The C2 domain maps to 45 to 202 (SDEKSRKSSE…IVNKLTDEWV (158 aa)). The region spanning 230–485 (FELLKVVGKG…AQEIKNHPFF (256 aa)) is the Protein kinase domain. ATP-binding positions include 236–244 (VGKGSFGKV) and K259. D353 (proton acceptor) is an active-site residue. T387 carries the post-translational modification Phosphothreonine; by ksg1. The region spanning 486–557 (DDIDWKKLCA…QRPTTIDTSD (72 aa)) is the AGC-kinase C-terminal domain. Phosphoserine; by TORC2 is present on residues S527 and S546.

This sequence belongs to the protein kinase superfamily. AGC Ser/Thr protein kinase family. In terms of processing, phosphorylated by ksg1 and target of rapamycin complex 2 (TORC2), affecting the kinase activity of gad8 in a nutrient-dependent manner.

It catalyses the reaction L-seryl-[protein] + ATP = O-phospho-L-seryl-[protein] + ADP + H(+). The catalysed reaction is L-threonyl-[protein] + ATP = O-phospho-L-threonyl-[protein] + ADP + H(+). Involved in a signaling module for sexual development and cell growth under stressed conditions. Required for G1 arrest under nitrogen starvation and for growth at high temperature and osmolarity. This chain is Serine/threonine-protein kinase gad8, found in Schizosaccharomyces pombe (strain 972 / ATCC 24843) (Fission yeast).